A 571-amino-acid chain; its full sequence is MTYLLNSPDDFADEAVRGLVAANPDLLTEVPGGVVRSTETPKGQPALVIGGGSGHYPAFAGWVGPGMGHGAPCGNIFSSPSASEVYSVVRNAENGGGVILGFGNYAGDVLHFGLAAEKLRHEGIDVRIVTVSDDIASNSPENHRDRRGVAGDLPVFKIAGAAIEAGADLDEAERVAWKANDATRSFGLAFEGCTLPGATEPLFHVEKGWMGVGLGIHGEPGVRDNRLGTAAEVADMLFDEVTAEEPPRGENGYDGRVAVILNGLGTVKYEELFVVYGRIAERLAQQGFTVVRPEVGEFVTSLDMAGVSLTMVFLDDELERLWTAPVETPAYRRGAMPAVDRTPRTTTWDAAETTIPEASEGSRECARNIVAVLETFQQVCADNEAELGRIDAVAGDGDHGQGMSFGSRGAAQAARDAVDRNAGARTTLLLAGQAWADAAGGTSGALWGAALTSAGGVFSDTDGADEQAAVDAICAGIDAILRLGGAQPGDKTMVDAAVPFRDALVKAFDTQAGPAITSAARVAREAAEKTADITARRGRARVLGEKSVGTPDPGALSFAMLMKALGEHLTR.

Positions 7–331 (SPDDFADEAV…WTAPVETPAY (325 aa)) constitute a DhaK domain. The active-site Tele-hemiaminal-histidine intermediate is histidine 217. The region spanning 367–567 (RNIVAVLETF…FAMLMKALGE (201 aa)) is the DhaL domain. Residues 396 to 402 (DGDHGQG), 442 to 443 (TS), glycine 484, arginine 539, and 552 to 554 (DPG) each bind ATP.

It carries out the reaction L-erythrulose + ATP = L-erythrulose 1-phosphate + ADP + H(+). It participates in carbohydrate metabolism; L-threitol degradation. Its function is as follows. Kinase that has a preference for L-erythrulose, producing L-erythrulose-1P. Involved in the degradation pathway of L-threitol, that allows M.smegmatis to grow on this compound as the sole carbon source. Is also able to phosphorylate D-erythrulose and dihydroxyacetone in vitro. The sequence is that of L-erythrulose 1-kinase from Mycolicibacterium smegmatis (strain ATCC 700084 / mc(2)155) (Mycobacterium smegmatis).